The following is a 174-amino-acid chain: Glutamyl-tRNA(Gln) amidotransferase subunit F, mitochondrial (174 aa).

The protein belongs to the GatF family. In terms of assembly, subunit of the heterotrimeric GatFAB amidotransferase (AdT) complex, composed of A, B and F subunits.

The protein localises to the mitochondrion inner membrane. The catalysed reaction is L-glutamyl-tRNA(Gln) + L-glutamine + ATP + H2O = L-glutaminyl-tRNA(Gln) + L-glutamate + ADP + phosphate + H(+). Its function is as follows. Allows the formation of correctly charged Gln-tRNA(Gln) through the transamidation of misacylated Glu-tRNA(Gln) in the mitochondria. The reaction takes place in the presence of glutamine and ATP through an activated gamma-phospho-Glu-tRNA(Gln). Required for proper protein synthesis within the mitochondrion. This is Glutamyl-tRNA(Gln) amidotransferase subunit F, mitochondrial from Kluyveromyces lactis (strain ATCC 8585 / CBS 2359 / DSM 70799 / NBRC 1267 / NRRL Y-1140 / WM37) (Yeast).